Consider the following 397-residue polypeptide: Tryptophan synthase beta chain (397 aa).

Lysine 87 carries the post-translational modification N6-(pyridoxal phosphate)lysine.

The protein belongs to the TrpB family. As to quaternary structure, tetramer of two alpha and two beta chains. Pyridoxal 5'-phosphate serves as cofactor.

The catalysed reaction is (1S,2R)-1-C-(indol-3-yl)glycerol 3-phosphate + L-serine = D-glyceraldehyde 3-phosphate + L-tryptophan + H2O. It functions in the pathway amino-acid biosynthesis; L-tryptophan biosynthesis; L-tryptophan from chorismate: step 5/5. In terms of biological role, the beta subunit is responsible for the synthesis of L-tryptophan from indole and L-serine. This Escherichia coli O45:K1 (strain S88 / ExPEC) protein is Tryptophan synthase beta chain.